The chain runs to 222 residues: Cytochrome b6 (222 aa).

Residues 39–59 form a helical membrane-spanning segment; that stretch reads IFYCLGGITLVCFLIQFATGF. Cys42 lines the heme c pocket. His93 and His107 together coordinate heme b. 3 helical membrane passes run 97-117, 123-143, and 193-213; these read ASMMVLMMILHTFRVYLTGGF, LTWVTGVVMAVITVSFGVTGY, and LHTFVLPWFIAVFMLLHFLMI. 2 residues coordinate heme b: His194 and His209.

This sequence belongs to the cytochrome b family. PetB subfamily. In terms of assembly, the 4 large subunits of the cytochrome b6-f complex are cytochrome b6, subunit IV (17 kDa polypeptide, PetD), cytochrome f and the Rieske protein, while the 4 small subunits are PetG, PetL, PetM and PetN. The complex functions as a dimer. Heme b serves as cofactor. Heme c is required as a cofactor.

Its subcellular location is the cellular thylakoid membrane. In terms of biological role, component of the cytochrome b6-f complex, which mediates electron transfer between photosystem II (PSII) and photosystem I (PSI), cyclic electron flow around PSI, and state transitions. In Trichodesmium erythraeum (strain IMS101), this protein is Cytochrome b6.